A 1154-amino-acid polypeptide reads, in one-letter code: Coiled-coil domain-containing protein 136 (1154 aa).

A disordered region spans residues 1 to 48 (MQAMEGEVLLPALYEEEEEEEEEEEEVEEEEEQVQKGGSVGSLSVNKH). The span at 14 to 32 (YEEEEEEEEEEEEVEEEEE) shows a compositional bias: acidic residues. Serine 52 carries the phosphoserine modification. Coiled-coil stretches lie at residues 696–733 (QAKQELLQQEQGRLLEERKRLQADLQLCLEEMQLLQVQ) and 859–974 (KLQA…RPSV). Positions 1031–1058 (DGLAKEEEKKEEMEEEKKQVKEEAKEQC) are enriched in basic and acidic residues. Residues 1031 to 1131 (DGLAKEEEKK…SSPTPNPPIF (101 aa)) are disordered. Residues 1077 to 1109 (DQEENEEDKEEEEKEEDSEEEEDDADSSLESPE) show a composition bias toward acidic residues. Residues 1130–1150 (IFSLPLVGLVVISALLWCWWA) form a helical membrane-spanning segment.

Expressed in gastric tissues. Down-regulated in gastric cancer.

The protein resides in the cytoplasmic vesicle. The protein localises to the secretory vesicle. Its subcellular location is the acrosome membrane. Functionally, may play a role in acrosome formation in spermatogenesis and in fertilization. In Homo sapiens (Human), this protein is Coiled-coil domain-containing protein 136 (CCDC136).